The chain runs to 220 residues: Aspartic protease inhibitor 4 (220 aa).

The signal sequence occupies residues M1–T23. Residues S24–S32 constitute a propeptide that is removed on maturation. Positions N26–P31 match the Vacuolar targeting signal motif. N-linked (GlcNAc...) asparagine glycosylation is present at N51. 2 disulfide bridges follow: C80–C125 and C174–C185.

The protein belongs to the protease inhibitor I3 (leguminous Kunitz-type inhibitor) family. Tubers.

It localises to the vacuole. In terms of biological role, inhibits tightly cathepsin D (aspartic protease) and weakly trypsin (serine protease). May protect the plant by inhibiting proteases of invading organisms. This is Aspartic protease inhibitor 4 from Solanum tuberosum (Potato).